Reading from the N-terminus, the 473-residue chain is Psoralen synthase (473 aa).

A helical transmembrane segment spans residues 1–17 (YFFPLFLVTIFLYKWLV). Residues 350 to 355 (TAPLLV) form a substrate specificity region. Heme is bound at residue Cys-425.

This sequence belongs to the cytochrome P450 family. Heme serves as cofactor.

It is found in the microsome membrane. The enzyme catalyses (7S)-marmesin + reduced [NADPH--hemoprotein reductase] + O2 = psoralen + acetone + oxidized [NADPH--hemoprotein reductase] + 2 H2O + H(+). Its pathway is secondary metabolite biosynthesis. Involved in the biosynthesis of coumarins and furanocoumarins (FCs), natural products required for defense responses against attacks by predators with potential medical and agroindustrial usages such as anticoagulant, rodenticide and artificial vanilla substitutes. Involved in linear furanocumarin (psoralen) biosynthesis. Converts marmesin to psoralen and, with much lower affinity, 5-hydroxymarmesin to bergaptol. This is Psoralen synthase from Pastinaca sativa (Wild parsnip).